We begin with the raw amino-acid sequence, 377 residues long: Nitric oxide reductase FlRd-NAD(+) reductase (377 aa).

The protein belongs to the FAD-dependent oxidoreductase family. FAD is required as a cofactor.

The protein localises to the cytoplasm. It carries out the reaction 2 reduced [nitric oxide reductase rubredoxin domain] + NAD(+) + H(+) = 2 oxidized [nitric oxide reductase rubredoxin domain] + NADH. It participates in nitrogen metabolism; nitric oxide reduction. One of at least two accessory proteins for anaerobic nitric oxide (NO) reductase. Reduces the rubredoxin moiety of NO reductase. The polypeptide is Nitric oxide reductase FlRd-NAD(+) reductase (Escherichia coli O157:H7).